We begin with the raw amino-acid sequence, 101 residues long: Small ribosomal subunit protein uS14 (101 aa).

This sequence belongs to the universal ribosomal protein uS14 family. Part of the 30S ribosomal subunit. Contacts proteins S3 and S10.

Functionally, binds 16S rRNA, required for the assembly of 30S particles and may also be responsible for determining the conformation of the 16S rRNA at the A site. The chain is Small ribosomal subunit protein uS14 from Novosphingobium aromaticivorans (strain ATCC 700278 / DSM 12444 / CCUG 56034 / CIP 105152 / NBRC 16084 / F199).